Consider the following 725-residue polypeptide: Kinesin-like protein KIN-8A (725 aa).

Residues 1-32 (MPVSTRSKVMKQERNEQENTNLNLPLRNPHQG) are disordered. The region spanning 151-481 (RILVFVRLRP…LHWADRAKEI (331 aa)) is the Kinesin motor domain. Residue 243–250 (GATGAGKT) coordinates ATP. 2 coiled-coil regions span residues 499 to 541 (EGAD…AANN) and 583 to 617 (ESLK…EHGL). Disordered regions lie at residues 652–672 (GSLR…RFAS) and 691–725 (SPAL…HMKH). The segment covering 655 to 665 (RPKEKEKELKS) has biased composition (basic and acidic residues).

This sequence belongs to the TRAFAC class myosin-kinesin ATPase superfamily. Kinesin family. KIN-8 subfamily.

The protein is Kinesin-like protein KIN-8A of Arabidopsis thaliana (Mouse-ear cress).